A 338-amino-acid polypeptide reads, in one-letter code: Fusarubin cluster-specific transcription factor fsr6 (338 aa).

Residues 16 to 44 (CDACTTAKVRCSRTHPCERCEDNGQAKEC) constitute a DNA-binding region (zn(2)-C6 fungal-type).

Its subcellular location is the nucleus. In terms of biological role, transcription factor that regulates the expression of the gene cluster that mediates the biosynthesis of fusarubins, highly pigmented naphthoquinones responsible for the coloration of the fruiting bodies. The protein is Fusarubin cluster-specific transcription factor fsr6 of Gibberella fujikuroi (strain CBS 195.34 / IMI 58289 / NRRL A-6831) (Bakanae and foot rot disease fungus).